Reading from the N-terminus, the 455-residue chain is RQC trigger complex subunit RQT4 homolog (455 aa).

2 disordered regions span residues 64–98 (STHSGNSPSIMKNKKNVTPNNNIRQKNTATSSHPS) and 118–148 (PASRNKSQSNNISSHEKSSKTTKNVSPGVMT). Composition is skewed to polar residues over residues 65 to 98 (THSGNSPSIMKNKKNVTPNNNIRQKNTATSSHPS) and 119 to 130 (ASRNKSQSNNIS). The residue at position 70 (Ser-70) is a Phosphoserine. The residue at position 380 (Ser-380) is a Phosphoserine.

Component of the RQT (ribosome quality control trigger) complex.

The protein resides in the cytoplasm. It localises to the cytosol. Probably functions as part of the RQC trigger (RQT) complex that activates the ribosome quality control (RQC) pathway, a pathway that degrades nascent peptide chains during problematic translation. The protein is RQC trigger complex subunit RQT4 homolog of Schizosaccharomyces pombe (strain 972 / ATCC 24843) (Fission yeast).